Consider the following 1652-residue polypeptide: Maestro heat-like repeat-containing protein family member 1 (1652 aa).

HEAT repeat units follow at residues 3-41 (ETYA…SKPA), 260-300 (EEQL…VGSR), 344-382 (CCSP…AAAA), 385-423 (EVKK…HGYL), 1369-1407 (LMLL…GSPD), 1410-1448 (QTHS…LMDL), and 1616-1652 (QVDL…VKFA).

The protein belongs to the MROH1 family. Homooligomer; homooligomerizes at lysosome scission sites.

It is found in the lysosome membrane. Lysosome fission factor. Recruited to lysosomes by RAB7 (RAB7A or RAB7B) at scission sites and homooligomerizes to mediate the constriction and scission of lysosomal tubules. May sever membranes by inserting amphipathic helices into one bilayer leaflet. Lysosome fission is required to maintain their steady-state number, shape, size, composition and function, and to accomplish regeneration. The protein is Maestro heat-like repeat-containing protein family member 1 (MROH1) of Bos taurus (Bovine).